The chain runs to 157 residues: Recombination endonuclease VII (157 aa).

Positions 23 and 26 each coordinate Zn(2+). Asp-40 provides a ligand contact to Ca(2+). Residues Cys-58 and Cys-61 each coordinate Zn(2+). Asn-62 is a Ca(2+) binding site.

As to quaternary structure, homodimer. Ca(2+) serves as cofactor. Zn(2+) is required as a cofactor.

Its function is as follows. Cleaves DNA cruciform and Y-structures as well as heteroduplex loops. Resolves Holliday junctions, recognizes a broad spectrum of DNA substrates ranging from branched DNAs to single base mismatches. The polypeptide is Recombination endonuclease VII (49) (Enterobacteria phage T4 (Bacteriophage T4)).